We begin with the raw amino-acid sequence, 270 residues long: Tetraspanin-17 (270 aa).

At 1 to 19 (MPGKHQQFQDPEVGCCGKY) the chain is on the cytoplasmic side. Residues 20–40 (FLFGFNIVFWVLGALFLAIGL) traverse the membrane as a helical segment. Topologically, residues 41–63 (WAWGEKGVLSNISGLTDLGGLDP) are extracellular. The N-linked (GlcNAc...) asparagine glycan is linked to N51. Residues 64–84 (VWLFVVIGGIMSVLGFAGCIG) traverse the membrane as a helical segment. At 85 to 94 (ALRENTFLLK) the chain is on the cytoplasmic side. A helical membrane pass occupies residues 95–115 (FFSVFLGLIFFLELAAGILAF). Over 116–234 (VFKDWIRDQL…GQFEKWLQDN (119 aa)) the chain is Extracellular. Intrachain disulfides connect C155–C223, C156–C188, C172–C182, and C189–C202. A glycan (N-linked (GlcNAc...) asparagine) is linked at N171. A helical transmembrane segment spans residues 235–255 (LIVVAGVLVAIALLQICGICL). The Cytoplasmic portion of the chain corresponds to 256 to 270 (AQNLVSDIEAVKANW).

Belongs to the tetraspanin (TM4SF) family. Interacts with ADAM10; the interaction influences ADAM10 substrate specificity, endocytosis and turnover.

It localises to the cell membrane. Part of TspanC8 subgroup, composed of 6 members that interact with the transmembrane metalloprotease ADAM10. This interaction is required for ADAM10 exit from the endoplasmic reticulum and for enzymatic maturation and trafficking to the cell surface as well as substrate specificity. Different TspanC8/ADAM10 complexes have distinct substrates. Seems to regulate VE-cadherin expression in endothelial cells probably through interaction with ADAM10, promoting leukocyte transmigration. This chain is Tetraspanin-17 (Tspan17), found in Rattus norvegicus (Rat).